The sequence spans 292 residues: NAD kinase (292 aa).

Aspartate 73 functions as the Proton acceptor in the catalytic mechanism. NAD(+)-binding positions include 73-74 (DG), 147-148 (NE), histidine 158, arginine 175, aspartate 177, 188-193 (TGYSLS), and glutamine 248.

Belongs to the NAD kinase family. It depends on a divalent metal cation as a cofactor.

The protein localises to the cytoplasm. The catalysed reaction is NAD(+) + ATP = ADP + NADP(+) + H(+). Functionally, involved in the regulation of the intracellular balance of NAD and NADP, and is a key enzyme in the biosynthesis of NADP. Catalyzes specifically the phosphorylation on 2'-hydroxyl of the adenosine moiety of NAD to yield NADP. The sequence is that of NAD kinase from Buchnera aphidicola subsp. Baizongia pistaciae (strain Bp).